We begin with the raw amino-acid sequence, 448 residues long: Endoglucanase (448 aa).

A signal peptide spans 1 to 34 (MFSKIKKINFFKKTFSFLIAVVMMLFTVLGTNTY). Substrate is bound by residues His70, 74–75 (WY), Tyr101, and His137. The active-site Proton donor is the Glu175. Tyr237 lines the substrate pocket. The Nucleophile role is filled by Glu263. Residues 269-270 (AS), Trp297, and 302-304 (KSE) contribute to the substrate site.

This sequence belongs to the glycosyl hydrolase 5 (cellulase A) family.

The enzyme catalyses Endohydrolysis of (1-&gt;4)-beta-D-glucosidic linkages in cellulose, lichenin and cereal beta-D-glucans.. In Clostridium saccharobutylicum, this protein is Endoglucanase (eglA).